The following is a 200-amino-acid chain: Glycerol-3-phosphate acyltransferase (200 aa).

5 consecutive transmembrane segments (helical) span residues 6-26, 56-76, 82-102, 118-138, and 141-161; these read LTLG…AVLV, SAAM…YIAF, QVAL…PIFF, APIG…MVLI, and YSSL…WFLD.

It belongs to the PlsY family. In terms of assembly, probably interacts with PlsX.

It is found in the cell inner membrane. The enzyme catalyses an acyl phosphate + sn-glycerol 3-phosphate = a 1-acyl-sn-glycero-3-phosphate + phosphate. The protein operates within lipid metabolism; phospholipid metabolism. In terms of biological role, catalyzes the transfer of an acyl group from acyl-phosphate (acyl-PO(4)) to glycerol-3-phosphate (G3P) to form lysophosphatidic acid (LPA). This enzyme utilizes acyl-phosphate as fatty acyl donor, but not acyl-CoA or acyl-ACP. This chain is Glycerol-3-phosphate acyltransferase, found in Shewanella sediminis (strain HAW-EB3).